The following is a 295-amino-acid chain: Thioredoxin-related transmembrane protein 2 (295 aa).

The first 48 residues, 1-48 (MAVLAPLIALVYSVPRLSRWLARPYCLLSALLSIAFLLVRKLPPICNG), serve as a signal peptide directing secretion. Topologically, residues 49–102 (LPTQREDGNPCDFDWREVEILMFLSAIVMMKNRRSITVEQHVGNIFMFSKVANA) are extracellular. The helical transmembrane segment at 103-125 (ILFFRLDIRMGLLYLTLCIVFLM) threads the bilayer. Positions 114–269 (LLYLTLCIVF…LYQRAKKLSK (156 aa)) constitute a Thioredoxin domain. The Cytoplasmic segment spans residues 126–295 (TCKPPLYMGP…VPDGENKKDK (170 aa)). Phosphoserine occurs at positions 211 and 243. A disordered region spans residues 266 to 295 (KLSKGGDMSEEKPGNPTPTAVPDGENKKDK). Residues 292-295 (KKDK) carry the Di-lysine motif motif.

As to quaternary structure, monomer. Homodimer; disulfide-linked. Occurs in both reduced and oxidized monomeric form. Oxidative conditions increase homodimerization. Interacts with CANX. Interacts with ATP2A2.

It is found in the endoplasmic reticulum membrane. It localises to the mitochondrion membrane. In terms of biological role, endoplasmic reticulum and mitochondria-associated protein that probably functions as a regulator of cellular redox state and thereby regulates protein post-translational modification, protein folding and mitochondrial activity. Indirectly regulates neuronal proliferation, migration, and organization in the developing brain. This chain is Thioredoxin-related transmembrane protein 2 (Tmx2), found in Rattus norvegicus (Rat).